We begin with the raw amino-acid sequence, 76 residues long: Sulfur carrier protein TusA (76 aa).

The active-site Cysteine persulfide intermediate is Cys-14.

Belongs to the sulfur carrier protein TusA family. As to quaternary structure, interacts with IscS.

It localises to the cytoplasm. Its pathway is tRNA modification. Its function is as follows. Sulfur carrier protein involved in sulfur trafficking in the cell. Part of a sulfur-relay system required for 2-thiolation during synthesis of 2-thiouridine of the modified wobble base 5-methylaminomethyl-2-thiouridine (mnm(5)s(2)U) in tRNA. Interacts with IscS and stimulates its cysteine desulfurase activity. Accepts an activated sulfur from IscS, which is then transferred to TusD, and thus determines the direction of sulfur flow from IscS to 2-thiouridine formation. Also appears to be involved in sulfur transfer for the biosynthesis of molybdopterin. The chain is Sulfur carrier protein TusA from Buchnera aphidicola subsp. Acyrthosiphon pisum (strain 5A).